The sequence spans 521 residues: MDTESQYSGYSYKSGHSRSSRKHRDRRDRHRSKSRDGSRGDKSVTIQAPGEPLLDNESTRGDERDDNWGETTTVVTGTSEHSISHDDLTRIAKDMEDSVPLDCSRHLGVAAGAILALLSFLTPLAFLLLPPLLWREELEPCGTACEGLFISVAFKLLILLLGSWALFFRRPKASLPRVFVLRALLMVLVFLLVISYWLFYGVRILDARERSYQGVVQFAVSLVDALLFVHYLAVVLLELRQLQPQFTLKVVRSTDGASRFYNVGHLSIQRVAVWILEKYYHDFPVYNPALLNLPKSVLAKKVSGFKVYSLGEENSTNNSTGQSRAVIAAAARRRDNSHNEYYYEEAEHERRVRKRRARLVVAVEEAFTHIKRLQEEEQKNPREVMDPREAAQAIFASMARAMQKYLRTTKQQPYHTMESILQHLEFCITHDMTPKAFLERYLAAGPTIQYHKERWLAKQWTLVSEEPVTNGLKDGIVFLLKRQDFSLVVSTKKVPFFKLSEEFVDPKSHKFVMRLQSETSV.

The disordered stretch occupies residues 1–81 (MDTESQYSGY…TTVVTGTSEH (81 aa)). The Cytoplasmic portion of the chain corresponds to 1 to 108 (MDTESQYSGY…VPLDCSRHLG (108 aa)). The span at 15–33 (GHSRSSRKHRDRRDRHRSK) shows a compositional bias: basic residues. Residues 57–67 (ESTRGDERDDN) are compositionally biased toward basic and acidic residues. Residues 69 to 81 (GETTTVVTGTSEH) are compositionally biased toward low complexity. The chain crosses the membrane as a helical span at residues 109-129 (VAAGAILALLSFLTPLAFLLL). The Extracellular segment spans residues 130 to 147 (PPLLWREELEPCGTACEG). A helical membrane pass occupies residues 148–168 (LFISVAFKLLILLLGSWALFF). The Cytoplasmic portion of the chain corresponds to 169–178 (RRPKASLPRV). Residues 179–199 (FVLRALLMVLVFLLVISYWLF) traverse the membrane as a helical segment. Over 200 to 217 (YGVRILDARERSYQGVVQ) the chain is Extracellular. A helical transmembrane segment spans residues 218-238 (FAVSLVDALLFVHYLAVVLLE). At 239–521 (LRQLQPQFTL…VMRLQSETSV (283 aa)) the chain is on the cytoplasmic side.

It belongs to the Vang family. Homodimer and heterodimer with Vangl1. Interacts through its C-terminal region with the N-terminal half of DVL1, DVL2 and DVL3. The PDZ domain of DVL1, DVL2 and DVL3 is required for the interaction. Variants Glu-255 and Asn-464 impair interaction with the DVL proteins. Also interacts with the PDZ domains of MAGI3, SCRIB/SCRB1 and FZD3. Interacts with PRICKLE3. As to expression, primarily expressed in the brain and epididymis. Not detected in the cochlea of Lp mice.

Its subcellular location is the cell membrane. Involved in the control of early morphogenesis and patterning of both axial midline structures and the development of neural plate. Plays a role in the regulation of planar cell polarity, particularly in the orientation of stereociliary bundles in the cochlea. Required for polarization and movement of myocardializing cells in the outflow tract and seems to act via RHOA signaling to regulate this process. Required for cell surface localization of FZD3 and FZD6 in the inner ear. In Mus musculus (Mouse), this protein is Vang-like protein 2 (Vangl2).